An 89-amino-acid chain; its full sequence is Small ribosomal subunit protein uS15 (89 aa).

This sequence belongs to the universal ribosomal protein uS15 family. Part of the 30S ribosomal subunit. Forms a bridge to the 50S subunit in the 70S ribosome, contacting the 23S rRNA.

Functionally, one of the primary rRNA binding proteins, it binds directly to 16S rRNA where it helps nucleate assembly of the platform of the 30S subunit by binding and bridging several RNA helices of the 16S rRNA. Its function is as follows. Forms an intersubunit bridge (bridge B4) with the 23S rRNA of the 50S subunit in the ribosome. This Parabacteroides distasonis (strain ATCC 8503 / DSM 20701 / CIP 104284 / JCM 5825 / NCTC 11152) protein is Small ribosomal subunit protein uS15.